We begin with the raw amino-acid sequence, 202 residues long: Holliday junction branch migration complex subunit RuvA (202 aa).

The interval 1–64 (MIDYVSGTLV…EDDESLYGFA (64 aa)) is domain I. The domain II stretch occupies residues 65–143 (TKAERTVFET…DLDVLEDTSP (79 aa)). A flexible linker region spans residues 144 to 149 (LSGGSD). The domain III stretch occupies residues 150-202 (ARAEARADALEALTELGLSKADAERSIRQVLRDNAGIQSADELVRRALKADQE).

The protein belongs to the RuvA family. Homotetramer. Forms an RuvA(8)-RuvB(12)-Holliday junction (HJ) complex. HJ DNA is sandwiched between 2 RuvA tetramers; dsDNA enters through RuvA and exits via RuvB. An RuvB hexamer assembles on each DNA strand where it exits the tetramer. Each RuvB hexamer is contacted by two RuvA subunits (via domain III) on 2 adjacent RuvB subunits; this complex drives branch migration. In the full resolvosome a probable DNA-RuvA(4)-RuvB(12)-RuvC(2) complex forms which resolves the HJ.

The protein localises to the cytoplasm. Functionally, the RuvA-RuvB-RuvC complex processes Holliday junction (HJ) DNA during genetic recombination and DNA repair, while the RuvA-RuvB complex plays an important role in the rescue of blocked DNA replication forks via replication fork reversal (RFR). RuvA specifically binds to HJ cruciform DNA, conferring on it an open structure. The RuvB hexamer acts as an ATP-dependent pump, pulling dsDNA into and through the RuvAB complex. HJ branch migration allows RuvC to scan DNA until it finds its consensus sequence, where it cleaves and resolves the cruciform DNA. The protein is Holliday junction branch migration complex subunit RuvA of Salinibacter ruber (strain DSM 13855 / M31).